Here is a 211-residue protein sequence, read N- to C-terminus: Type II secretion system protein J (211 aa).

Residues 1–7 (MRPRAAG) constitute a propeptide, leader sequence. Phe8 carries the post-translational modification N-methylphenylalanine. Residues 8–28 (FTLIEVLLATMLLVGGLALAF) form a helical membrane-spanning segment.

This sequence belongs to the GSP J family.

The protein localises to the membrane. Functionally, involved in a type II secretion system (T2SS, formerly general secretion pathway, GSP) for the export of proteins. This is Type II secretion system protein J (xpsJ) from Xanthomonas campestris pv. campestris (strain ATCC 33913 / DSM 3586 / NCPPB 528 / LMG 568 / P 25).